The chain runs to 273 residues: Ribosomal RNA small subunit methyltransferase A (273 aa).

S-adenosyl-L-methionine is bound by residues N18, L20, G45, E66, D91, and N113.

The protein belongs to the class I-like SAM-binding methyltransferase superfamily. rRNA adenine N(6)-methyltransferase family. RsmA subfamily.

The protein localises to the cytoplasm. The enzyme catalyses adenosine(1518)/adenosine(1519) in 16S rRNA + 4 S-adenosyl-L-methionine = N(6)-dimethyladenosine(1518)/N(6)-dimethyladenosine(1519) in 16S rRNA + 4 S-adenosyl-L-homocysteine + 4 H(+). Its function is as follows. Specifically dimethylates two adjacent adenosines (A1518 and A1519) in the loop of a conserved hairpin near the 3'-end of 16S rRNA in the 30S particle. May play a critical role in biogenesis of 30S subunits. The sequence is that of Ribosomal RNA small subunit methyltransferase A from Enterobacter sp. (strain 638).